The sequence spans 117 residues: Anti-sigma F factor antagonist (117 aa).

Residues 3 to 113 (LQIEMEHHRG…DNEVNALTEL (111 aa)) enclose the STAS domain. Position 58 is a phosphoserine (Ser58).

Belongs to the anti-sigma-factor antagonist family. In terms of processing, phosphorylated by SpoIIAB on a serine residue.

In the phosphorylated form it could act as an anti-anti-sigma factor that counteracts SpoIIAB and thus releases sigma f from inhibition. This chain is Anti-sigma F factor antagonist (spoIIAA), found in Paenibacillus polymyxa (Bacillus polymyxa).